The primary structure comprises 232 residues: Ubiquinone biosynthesis O-methyltransferase (232 aa).

S-adenosyl-L-methionine is bound by residues Arg36, Gly55, Asp76, and Leu120.

This sequence belongs to the methyltransferase superfamily. UbiG/COQ3 family.

It catalyses the reaction a 3-demethylubiquinol + S-adenosyl-L-methionine = a ubiquinol + S-adenosyl-L-homocysteine + H(+). The catalysed reaction is a 3-(all-trans-polyprenyl)benzene-1,2-diol + S-adenosyl-L-methionine = a 2-methoxy-6-(all-trans-polyprenyl)phenol + S-adenosyl-L-homocysteine + H(+). The protein operates within cofactor biosynthesis; ubiquinone biosynthesis. Functionally, O-methyltransferase that catalyzes the 2 O-methylation steps in the ubiquinone biosynthetic pathway. This is Ubiquinone biosynthesis O-methyltransferase from Dechloromonas aromatica (strain RCB).